A 98-amino-acid polypeptide reads, in one-letter code: Cystatin-B (98 aa).

Position 1 is an N-acetylmethionine (Met1). A Secondary area of contact motif is present at residues 46–50 (QIVAG).

This sequence belongs to the cystatin family. As to expression, widely expressed. Highest expression in heart, liver and kidney. Lower levels in brain, lung and skeletal muscle. Lowest levels in spleen and testis.

It localises to the cytoplasm. Its function is as follows. This is an intracellular thiol proteinase inhibitor. The sequence is that of Cystatin-B (Cstb) from Mus musculus (Mouse).